A 209-amino-acid polypeptide reads, in one-letter code: Uracil phosphoribosyltransferase (209 aa).

5-phospho-alpha-D-ribose 1-diphosphate-binding positions include Arg79, Arg104, and 131–139; that span reads DPMLATGGS. Residues Ile194 and 199–201 each bind uracil; that span reads GDA. Asp200 lines the 5-phospho-alpha-D-ribose 1-diphosphate pocket.

The protein belongs to the UPRTase family. The cofactor is Mg(2+).

It catalyses the reaction UMP + diphosphate = 5-phospho-alpha-D-ribose 1-diphosphate + uracil. Its pathway is pyrimidine metabolism; UMP biosynthesis via salvage pathway; UMP from uracil: step 1/1. Allosterically activated by GTP. In terms of biological role, catalyzes the conversion of uracil and 5-phospho-alpha-D-ribose 1-diphosphate (PRPP) to UMP and diphosphate. This Clostridium botulinum (strain Alaska E43 / Type E3) protein is Uracil phosphoribosyltransferase.